Consider the following 486-residue polypeptide: 3-sulfolactaldehyde dehydrogenase (486 aa).

Residues 157–158 (WN), 181–184 (RPAS), and 234–235 (GS) each bind NADP(+). Glu-256 acts as the Proton acceptor in catalysis. Residue Leu-257 coordinates NADP(+). Cys-290 serves as the catalytic Nucleophile. An NADP(+)-binding site is contributed by Glu-387.

It belongs to the aldehyde dehydrogenase family.

The catalysed reaction is (2S)-3-sulfolactaldehyde + NADP(+) + H2O = (2S)-3-sulfolactate + NADPH + 2 H(+). The enzyme catalyses (2S)-3-sulfolactaldehyde + NAD(+) + H2O = (2S)-3-sulfolactate + NADH + 2 H(+). In terms of biological role, catalyzes the oxidation of (2S)-3-sulfolactaldehyde to (2S)-3-sulfolactate, using both NAD(+) and NADP(+) as electron acceptors. Is involved in a degradation pathway of sulfoquinovose (SQ) that allows P.putida SQ1 to use SQ as the sole carbon and energy source for growth. In Pseudomonas putida (Arthrobacter siderocapsulatus), this protein is 3-sulfolactaldehyde dehydrogenase.